Here is a 416-residue protein sequence, read N- to C-terminus: Homogentisate 1,2-dioxygenase (416 aa).

The active-site Proton acceptor is the H275. Residues H318 and E324 each coordinate Fe cation. Positions 333 and 354 each coordinate homogentisate. A Fe cation-binding site is contributed by H354.

The protein belongs to the homogentisate dioxygenase family. As to quaternary structure, hexamer; dimer of trimers. The cofactor is Fe cation.

It carries out the reaction homogentisate + O2 = 4-maleylacetoacetate + H(+). It functions in the pathway amino-acid degradation; L-phenylalanine degradation; acetoacetate and fumarate from L-phenylalanine: step 4/6. In terms of biological role, involved in the catabolism of homogentisate (2,5-dihydroxyphenylacetate or 2,5-OH-PhAc), a central intermediate in the degradation of phenylalanine and tyrosine. Catalyzes the oxidative ring cleavage of the aromatic ring of homogentisate to yield maleylacetoacetate. This chain is Homogentisate 1,2-dioxygenase, found in Legionella pneumophila subsp. pneumophila (strain Philadelphia 1 / ATCC 33152 / DSM 7513).